The following is a 292-amino-acid chain: Protoheme IX farnesyltransferase (292 aa).

8 helical membrane passes run 15–35 (YLVL…LGGM), 49–69 (FWTL…NMVI), 104–124 (VFSL…LVAL), 147–167 (IGGI…SGSV), 171–191 (AIAL…VLAL), 218–238 (TLLY…TGLV), 242–262 (YFVV…KFFF), and 271–291 (LFFF…VDMV).

It belongs to the UbiA prenyltransferase family. Protoheme IX farnesyltransferase subfamily.

Its subcellular location is the cell inner membrane. The catalysed reaction is heme b + (2E,6E)-farnesyl diphosphate + H2O = Fe(II)-heme o + diphosphate. The protein operates within porphyrin-containing compound metabolism; heme O biosynthesis; heme O from protoheme: step 1/1. Its function is as follows. Converts heme B (protoheme IX) to heme O by substitution of the vinyl group on carbon 2 of heme B porphyrin ring with a hydroxyethyl farnesyl side group. This chain is Protoheme IX farnesyltransferase, found in Aquifex aeolicus (strain VF5).